A 645-amino-acid polypeptide reads, in one-letter code: Rho GTPase-activating protein 25 (645 aa).

A PH domain is found at 46–151 (RPIKMGWLKK…WVKFLRRVAG (106 aa)). The region spanning 159–353 (QRLDETVAYE…MMIRDHEVLF (195 aa)) is the Rho-GAP domain. Disordered stretches follow at residues 355–444 (KSKD…QTLP) and 469–550 (FWSP…EEEI). 2 positions are modified to phosphoserine: Ser-362 and Ser-395. Residues 393-409 (TDSFSSMTSDSDTTSPT) are compositionally biased toward low complexity. Thr-406 is modified (phosphothreonine). The span at 420-431 (DSSKVPREKPGD) shows a compositional bias: basic and acidic residues. The span at 487–504 (SQDLRQLSDSQRTSTYDN) shows a compositional bias: polar residues. Ser-536 carries the post-translational modification Phosphoserine. Residues 541 to 644 (GKKNSGEEEI…VKSMKEPKTE (104 aa)) adopt a coiled-coil conformation.

Its function is as follows. GTPase activator for the Rho-type GTPases by converting them to an inactive GDP-bound state. In Homo sapiens (Human), this protein is Rho GTPase-activating protein 25 (ARHGAP25).